The following is a 121-amino-acid chain: Large ribosomal subunit protein bL20 (121 aa).

This sequence belongs to the bacterial ribosomal protein bL20 family.

Binds directly to 23S ribosomal RNA and is necessary for the in vitro assembly process of the 50S ribosomal subunit. It is not involved in the protein synthesizing functions of that subunit. The protein is Large ribosomal subunit protein bL20 of Methylorubrum populi (strain ATCC BAA-705 / NCIMB 13946 / BJ001) (Methylobacterium populi).